The following is a 171-amino-acid chain: MEQDNSPRKIQFTVPLLEPHLDPEAAEQIRRRRPTPATLVLTSDQSSPEIDEDRIPNPHLKSTLAMSPRQRKKMTRITPTMKELQMMVEHHLGQQQQGEEPEGAAESTGTQESRPPGIPDTEVESRLGTSGTAKKTAECIPKTHERGSKEPSTKEPSTHIPPLDSKGANSV.

The residue at position 1 (Met1) is an N-acetylmethionine. A disordered region spans residues 1 to 171; the sequence is MEQDNSPRKI…PLDSKGANSV (171 aa). Positions 9–12 are essential for activity; that stretch reads KIQF. Residues 19-29 show a composition bias toward basic and acidic residues; it reads PHLDPEAAEQI. Phosphothreonine; by PKA is present on Thr35. The segment at 42 to 54 is essential for activity; the sequence is TSDQSSPEIDEDR. Phosphoserine occurs at positions 43, 46, 47, and 67. The segment covering 135–157 has biased composition (basic and acidic residues); that stretch reads KTAECIPKTHERGSKEPSTKEPS. The interaction with PPP1R15A stretch occupies residues 143–171; sequence THERGSKEPSTKEPSTHIPPLDSKGANSV.

It belongs to the protein phosphatase inhibitor 1 family. As to quaternary structure, interacts with PPP1R15A. In terms of processing, phosphorylation of Thr-35 is required for activity.

Functionally, inhibitor of protein-phosphatase 1. This protein may be important in hormonal control of glycogen metabolism. Hormones that elevate intracellular cAMP increase I-1 activity in many tissues. I-1 activation may impose cAMP control over proteins that are not directly phosphorylated by PKA. Following a rise in intracellular calcium, I-1 is inactivated by calcineurin (or PP2B). Does not inhibit type-2 phosphatases. The protein is Protein phosphatase 1 regulatory subunit 1A (PPP1R1A) of Homo sapiens (Human).